The following is a 407-amino-acid chain: MYSTPAPPEVTRRNSEPSTRQGTLGSLQGEKGQIIFPGFVVLLTIILVIIAACILWSWKKQKKRPVPYFQVAPSLTLPPPRHRAKNIYDFLPRQQTELGRHQLSGFSTESLLSRASDSPEPEAPQANGSLQMHRVSVHTVEYSVNIYDNGTVPQMCRHLASSTHHVCVRTSRSNPSISSKESNDYVNIPTVEDTCETLTRIESTPENHLGLPSALRLEFAEGGHAGCGNATDHDGFWAPGPKCSDSLSDGDDLSQTSNDYVNMTGLDLENIQENRPRGAFQCCRDYENVPWVDTNESQLPTLEEVASSTVDHREPVWRTLSSVYHMAFQPSAQSEDSAMVHREEQSSEDSSDYETVLVAELEGRDWKQGPGTQHPSDEGTPGDLAGKLCEVVYPAGSLATETSDEDA.

Positions 1–25 (MYSTPAPPEVTRRNSEPSTRQGTLG) are disordered. At 1-33 (MYSTPAPPEVTRRNSEPSTRQGTLGSLQGEKGQ) the chain is on the extracellular side. Residues 16–25 (EPSTRQGTLG) are compositionally biased toward polar residues. A helical; Signal-anchor for type III membrane protein membrane pass occupies residues 34-54 (IIFPGFVVLLTIILVIIAACI). Over 55-407 (LWSWKKQKKR…LATETSDEDA (353 aa)) the chain is Cytoplasmic. The interval 109–131 (ESLLSRASDSPEPEAPQANGSLQ) is disordered. Phosphotyrosine occurs at positions 185, 260, 286, and 353. Residues 331–388 (SAQSEDSAMVHREEQSSEDSSDYETVLVAELEGRDWKQGPGTQHPSDEGTPGDLAGKL) form a disordered region.

When phosphorylated, interacts with GRB2, PIK3R1 and GRAP2. Phosphorylated on tyrosines upon TCR or BCR activation; which leads to the recruitment of GRB2, PIK3R1 and GRAP2. In terms of tissue distribution, expressed in T-cells and B-cells.

Its subcellular location is the cell membrane. In terms of biological role, negatively regulates TCR (T-cell antigen receptor)-mediated signaling in T-cells and BCR (B-cell antigen receptor)-mediated signaling in B-cells. The sequence is that of Lymphocyte transmembrane adapter 1 (Lax1) from Mus musculus (Mouse).